A 362-amino-acid polypeptide reads, in one-letter code: Glutamate 5-kinase (362 aa).

Lys3 is an ATP binding site. Residues Ser43, Asp128, and Asn140 each coordinate substrate. Residues 160–161 (TD) and 202–208 (TGGMRTK) contribute to the ATP site. A PUA domain is found at 267-348 (AGAILIDDGA…REIENVLGYS (82 aa)).

It belongs to the glutamate 5-kinase family.

The protein resides in the cytoplasm. The catalysed reaction is L-glutamate + ATP = L-glutamyl 5-phosphate + ADP. The protein operates within amino-acid biosynthesis; L-proline biosynthesis; L-glutamate 5-semialdehyde from L-glutamate: step 1/2. In terms of biological role, catalyzes the transfer of a phosphate group to glutamate to form L-glutamate 5-phosphate. This chain is Glutamate 5-kinase, found in Xanthomonas euvesicatoria pv. vesicatoria (strain 85-10) (Xanthomonas campestris pv. vesicatoria).